Reading from the N-terminus, the 264-residue chain is DNA repair protein RecO (264 aa).

Belongs to the RecO family.

Functionally, involved in DNA repair and RecF pathway recombination. The protein is DNA repair protein RecO of Chlorobium luteolum (strain DSM 273 / BCRC 81028 / 2530) (Pelodictyon luteolum).